A 194-amino-acid polypeptide reads, in one-letter code: Holliday junction branch migration complex subunit RuvA (194 aa).

Residues 1 to 64 (MISRLTGKLV…EDAHLLFGFA (64 aa)) are domain I. The tract at residues 65–143 (TAEERKTFRQ…AHAVTDGLFA (79 aa)) is domain II. The interval 144-147 (AAPA) is flexible linker. Residues 147–194 (AADETEDIVGTLLALGYSEREAKAAVKGVPEGTDVGEGVRLALKNLLK) form a domain III region.

Belongs to the RuvA family. Homotetramer. Forms an RuvA(8)-RuvB(12)-Holliday junction (HJ) complex. HJ DNA is sandwiched between 2 RuvA tetramers; dsDNA enters through RuvA and exits via RuvB. An RuvB hexamer assembles on each DNA strand where it exits the tetramer. Each RuvB hexamer is contacted by two RuvA subunits (via domain III) on 2 adjacent RuvB subunits; this complex drives branch migration. In the full resolvosome a probable DNA-RuvA(4)-RuvB(12)-RuvC(2) complex forms which resolves the HJ.

It localises to the cytoplasm. Its function is as follows. The RuvA-RuvB-RuvC complex processes Holliday junction (HJ) DNA during genetic recombination and DNA repair, while the RuvA-RuvB complex plays an important role in the rescue of blocked DNA replication forks via replication fork reversal (RFR). RuvA specifically binds to HJ cruciform DNA, conferring on it an open structure. The RuvB hexamer acts as an ATP-dependent pump, pulling dsDNA into and through the RuvAB complex. HJ branch migration allows RuvC to scan DNA until it finds its consensus sequence, where it cleaves and resolves the cruciform DNA. The sequence is that of Holliday junction branch migration complex subunit RuvA from Neisseria meningitidis serogroup A / serotype 4A (strain DSM 15465 / Z2491).